A 257-amino-acid polypeptide reads, in one-letter code: Imidazole glycerol phosphate synthase subunit HisF (257 aa).

Residues Asp11 and Asp130 contribute to the active site.

It belongs to the HisA/HisF family. In terms of assembly, heterodimer of HisH and HisF.

It is found in the cytoplasm. The enzyme catalyses 5-[(5-phospho-1-deoxy-D-ribulos-1-ylimino)methylamino]-1-(5-phospho-beta-D-ribosyl)imidazole-4-carboxamide + L-glutamine = D-erythro-1-(imidazol-4-yl)glycerol 3-phosphate + 5-amino-1-(5-phospho-beta-D-ribosyl)imidazole-4-carboxamide + L-glutamate + H(+). It functions in the pathway amino-acid biosynthesis; L-histidine biosynthesis; L-histidine from 5-phospho-alpha-D-ribose 1-diphosphate: step 5/9. Functionally, IGPS catalyzes the conversion of PRFAR and glutamine to IGP, AICAR and glutamate. The HisF subunit catalyzes the cyclization activity that produces IGP and AICAR from PRFAR using the ammonia provided by the HisH subunit. The chain is Imidazole glycerol phosphate synthase subunit HisF from Shewanella sp. (strain W3-18-1).